The primary structure comprises 88 residues: Acylphosphatase (88 aa).

The Acylphosphatase-like domain maps to 3–88 (AARFVVSGVV…VPPTEDFVTG (86 aa)). Catalysis depends on residues Arg18 and Asn36.

The protein belongs to the acylphosphatase family.

The enzyme catalyses an acyl phosphate + H2O = a carboxylate + phosphate + H(+). The sequence is that of Acylphosphatase (acyP) from Xanthomonas oryzae pv. oryzae (strain MAFF 311018).